The primary structure comprises 318 residues: Tumor necrosis factor ligand superfamily member 11 (318 aa).

Over 1-47 (MRRANRDYGKYLRGSEEMGSCPGVPHEGPLHPAPSAPAPAPPPAASR) the chain is Cytoplasmic. The disordered stretch occupies residues 13–41 (RGSEEMGSCPGVPHEGPLHPAPSAPAPAP). Pro residues predominate over residues 31 to 41 (HPAPSAPAPAP). A helical; Signal-anchor for type II membrane protein membrane pass occupies residues 48–68 (FMFLALLGLGLGQVVCSIALF). The Extracellular segment spans residues 69–318 (LYFRAQMDPN…FGAFKVQDID (250 aa)). Residues 165–314 (PFAHLTINAA…DATYFGAFKV (150 aa)) enclose the THD domain. N-linked (GlcNAc...) asparagine glycans are attached at residues Asn199 and Asn264.

It belongs to the tumor necrosis factor family. Homotrimer. Interacts with TNFRSF11A and TNFRSF11B. Interacts with FBN1 (via N-terminal domain) in a Ca(+2)-dependent manner. Interacts with TNFAIP6 (via both Link and CUB domains). Post-translationally, the soluble form derives from the membrane form by proteolytic processing. In terms of tissue distribution, highly expressed in thymus and bone tissues.

The protein resides in the cell membrane. It localises to the secreted. Functionally, cytokine that binds to TNFRSF11B/OPG and to TNFRSF11A/RANK. Osteoclast differentiation and activation factor. Augments the ability of dendritic cells to stimulate naive T-cell proliferation. May be an important regulator of interactions between T-cells and dendritic cells and may play a role in the regulation of the T-cell-dependent immune response. May also play an important role in enhanced bone-resorption in humoral hypercalcemia of malignancy. Induces osteoclastogenesis by activating multiple signaling pathways in osteoclast precursor cells, chief among which is induction of long lasting oscillations in the intracellular concentration of Ca (2+) resulting in the activation of NFATC1, which translocates to the nucleus and induces osteoclast-specific gene transcription to allow differentiation of osteoclasts. During osteoclast differentiation, in a TMEM64 and ATP2A2-dependent manner induces activation of CREB1 and mitochondrial ROS generation necessary for proper osteoclast generation. This Rattus norvegicus (Rat) protein is Tumor necrosis factor ligand superfamily member 11 (Tnfsf11).